The chain runs to 378 residues: Anhydro-N-acetylmuramic acid kinase (378 aa).

Position 9–16 (Gly9–Asp16) interacts with ATP.

This sequence belongs to the anhydro-N-acetylmuramic acid kinase family.

It carries out the reaction 1,6-anhydro-N-acetyl-beta-muramate + ATP + H2O = N-acetyl-D-muramate 6-phosphate + ADP + H(+). The protein operates within amino-sugar metabolism; 1,6-anhydro-N-acetylmuramate degradation. It participates in cell wall biogenesis; peptidoglycan recycling. Its function is as follows. Catalyzes the specific phosphorylation of 1,6-anhydro-N-acetylmuramic acid (anhMurNAc) with the simultaneous cleavage of the 1,6-anhydro ring, generating MurNAc-6-P. Is required for the utilization of anhMurNAc either imported from the medium or derived from its own cell wall murein, and thus plays a role in cell wall recycling. This Synechococcus elongatus (strain ATCC 33912 / PCC 7942 / FACHB-805) (Anacystis nidulans R2) protein is Anhydro-N-acetylmuramic acid kinase.